The chain runs to 123 residues: Small ribosomal subunit protein uS12 (123 aa).

At D89 the chain carries 3-methylthioaspartic acid.

This sequence belongs to the universal ribosomal protein uS12 family. As to quaternary structure, part of the 30S ribosomal subunit. Contacts proteins S8 and S17. May interact with IF1 in the 30S initiation complex.

With S4 and S5 plays an important role in translational accuracy. Its function is as follows. Interacts with and stabilizes bases of the 16S rRNA that are involved in tRNA selection in the A site and with the mRNA backbone. Located at the interface of the 30S and 50S subunits, it traverses the body of the 30S subunit contacting proteins on the other side and probably holding the rRNA structure together. The combined cluster of proteins S8, S12 and S17 appears to hold together the shoulder and platform of the 30S subunit. This Maridesulfovibrio salexigens (strain ATCC 14822 / DSM 2638 / NCIMB 8403 / VKM B-1763) (Desulfovibrio salexigens) protein is Small ribosomal subunit protein uS12.